Reading from the N-terminus, the 159-residue chain is 2-C-methyl-D-erythritol 2,4-cyclodiphosphate synthase (159 aa).

Positions 10 and 12 each coordinate a divalent metal cation. 4-CDP-2-C-methyl-D-erythritol 2-phosphate is bound by residues 10–12 (DVH) and 36–37 (HS). His44 contacts a divalent metal cation. 4-CDP-2-C-methyl-D-erythritol 2-phosphate is bound by residues 58-60 (DIG), 63-67 (FPDTD), 102-108 (AQAPKMA), 134-137 (TTTE), Phe141, and Arg144.

It belongs to the IspF family. In terms of assembly, homotrimer. It depends on a divalent metal cation as a cofactor.

The catalysed reaction is 4-CDP-2-C-methyl-D-erythritol 2-phosphate = 2-C-methyl-D-erythritol 2,4-cyclic diphosphate + CMP. It functions in the pathway isoprenoid biosynthesis; isopentenyl diphosphate biosynthesis via DXP pathway; isopentenyl diphosphate from 1-deoxy-D-xylulose 5-phosphate: step 4/6. Functionally, involved in the biosynthesis of isopentenyl diphosphate (IPP) and dimethylallyl diphosphate (DMAPP), two major building blocks of isoprenoid compounds. Catalyzes the conversion of 4-diphosphocytidyl-2-C-methyl-D-erythritol 2-phosphate (CDP-ME2P) to 2-C-methyl-D-erythritol 2,4-cyclodiphosphate (ME-CPP) with a corresponding release of cytidine 5-monophosphate (CMP). The chain is 2-C-methyl-D-erythritol 2,4-cyclodiphosphate synthase from Idiomarina loihiensis (strain ATCC BAA-735 / DSM 15497 / L2-TR).